The following is a 129-amino-acid chain: Small ribosomal subunit protein uS11 (129 aa).

It belongs to the universal ribosomal protein uS11 family. As to quaternary structure, part of the 30S ribosomal subunit. Interacts with proteins S7 and S18. Binds to IF-3.

Functionally, located on the platform of the 30S subunit, it bridges several disparate RNA helices of the 16S rRNA. Forms part of the Shine-Dalgarno cleft in the 70S ribosome. The chain is Small ribosomal subunit protein uS11 from Agrobacterium fabrum (strain C58 / ATCC 33970) (Agrobacterium tumefaciens (strain C58)).